The primary structure comprises 431 residues: Serine/threonine-protein kinase Sgk1 (431 aa).

The tract at residues 1 to 60 (MTVKAEAARSTLTYSRMRGMVAILIAFMKQRRMGLNDFIQKIASNTYACKHAEVQSILKM) is necessary for localization to the mitochondria. Positions 65-92 (EPELMNANPSPPPSPSQQINLGPSSNPH) are disordered. Position 74 is a phosphoserine (S74). Residue S78 is modified to Phosphoserine; by MAPK7. Polar residues predominate over residues 81–91 (QQINLGPSSNP). Positions 98–355 (FHFLKVIGKG…FMEIKSHIFF (258 aa)) constitute a Protein kinase domain. Residues 104-112 (IGKGSFGKV) and K127 contribute to the ATP site. A Nuclear localization signal motif is present at residues 131-141 (KKAILKKKEEK). Catalysis depends on D222, which acts as the Proton acceptor. Phosphothreonine; by PDPK1 is present on T256. The 76-residue stretch at 356 to 431 (SLINWDDLIN…SYAPPVDSFL (76 aa)) folds into the AGC-kinase C-terminal domain. The residue at position 369 (T369) is a Phosphothreonine; by PKA. Phosphoserine occurs at positions 397, 401, and 422.

Belongs to the protein kinase superfamily. AGC Ser/Thr protein kinase family. As to quaternary structure, homodimer; disulfide-linked. Interacts with MAPK3/ERK1, MAPK1/ERK2, MAP2K1/MEK1, MAP2K2/MEK2, NEDD4, NEDD4L, MAPT/TAU, MAPK7, CREB1, SLC9A3R2/NHERF2 and KCNJ1/ROMK1. Forms a trimeric complex with FBXW7 and NOTCH1 Associates with the mammalian target of rapamycin complex 2 (mTORC2) via an interaction with MAPKAP1/SIN1. Regulated by phosphorylation. Activated by phosphorylation on Ser-422 by mTORC2, transforming it into a substrate for PDPK1 which phosphorylates it on Thr-256. Phosphorylation on Ser-397 and Ser-401 are also essential for its activity. Phosphorylation on Ser-78 by MAPK7 is required for growth factor-induced cell cycle progression. Post-translationally, ubiquitinated by NEDD4L; which promotes proteasomal degradation. Ubiquitinated by SYVN1 at the endoplasmic reticulum; which promotes rapid proteasomal degradation and maintains a high turnover rate in resting cells.

It is found in the cytoplasm. The protein resides in the nucleus. Its subcellular location is the endoplasmic reticulum membrane. The protein localises to the cell membrane. It localises to the mitochondrion. The enzyme catalyses L-seryl-[protein] + ATP = O-phospho-L-seryl-[protein] + ADP + H(+). It carries out the reaction L-threonyl-[protein] + ATP = O-phospho-L-threonyl-[protein] + ADP + H(+). Two specific sites, one in the kinase domain (Thr-256) and the other in the C-terminal regulatory region (Ser-422), need to be phosphorylated for its full activation. Phosphorylation at Ser-397 and Ser-401 are also essential for its activity. Activated by WNK1, WNK2, WNK3 and WNK4; which promote phosphorylation by mTORC2. In terms of biological role, serine/threonine-protein kinase which is involved in the regulation of a wide variety of ion channels, membrane transporters, cellular enzymes, transcription factors, neuronal excitability, cell growth, proliferation, survival, migration and apoptosis. Plays an important role in cellular stress response. Contributes to regulation of renal Na(+) retention, renal K(+) elimination, salt appetite, gastric acid secretion, intestinal Na(+)/H(+) exchange and nutrient transport, insulin-dependent salt sensitivity of blood pressure, salt sensitivity of peripheral glucose uptake, cardiac repolarization and memory consolidation. Up-regulates Na(+) channels: SCNN1A/ENAC, SCN5A and ASIC1/ACCN2, K(+) channels: KCNJ1/ROMK1, KCNA1-5, KCNQ1-5 and KCNE1, epithelial Ca(2+) channels: TRPV5 and TRPV6, chloride channels: BSND, CLCN2 and CFTR, glutamate transporters: SLC1A3/EAAT1, SLC1A2 /EAAT2, SLC1A1/EAAT3, SLC1A6/EAAT4 and SLC1A7/EAAT5, amino acid transporters: SLC1A5/ASCT2, SLC38A1/SN1 and SLC6A19, creatine transporter: SLC6A8, Na(+)/dicarboxylate cotransporter: SLC13A2/NADC1, Na(+)-dependent phosphate cotransporter: SLC34A2/NAPI-2B, glutamate receptor: GRIK2/GLUR6. Up-regulates carriers: SLC9A3/NHE3, SLC12A1/NKCC2, SLC12A3/NCC, SLC5A3/SMIT, SLC2A1/GLUT1, SLC5A1/SGLT1 and SLC15A2/PEPT2. Regulates enzymes: GSK3A/B, PMM2 and Na(+)/K(+) ATPase, and transcription factors: CTNNB1 and nuclear factor NF-kappa-B. Stimulates sodium transport into epithelial cells by enhancing the stability and expression of SCNN1A/ENAC. This is achieved by phosphorylating the NEDD4L ubiquitin E3 ligase, promoting its interaction with 14-3-3 proteins, thereby preventing it from binding to SCNN1A/ENAC and targeting it for degradation. Regulates store-operated Ca(+2) entry (SOCE) by stimulating ORAI1 and STIM1. Regulates KCNJ1/ROMK1 directly via its phosphorylation or indirectly via increased interaction with SLC9A3R2/NHERF2. Phosphorylates MDM2 and activates MDM2-dependent ubiquitination of p53/TP53. Phosphorylates MAPT/TAU and mediates microtubule depolymerization and neurite formation in hippocampal neurons. Phosphorylates SLC2A4/GLUT4 and up-regulates its activity. Phosphorylates APBB1/FE65 and promotes its localization to the nucleus. Phosphorylates MAPK1/ERK2 and activates it by enhancing its interaction with MAP2K1/MEK1 and MAP2K2/MEK2. Phosphorylates FBXW7 and plays an inhibitory role in the NOTCH1 signaling. Phosphorylates FOXO1 resulting in its relocalization from the nucleus to the cytoplasm. Phosphorylates FOXO3, promoting its exit from the nucleus and interference with FOXO3-dependent transcription. Phosphorylates BRAF and MAP3K3/MEKK3 and inhibits their activity. Phosphorylates SLC9A3/NHE3 in response to dexamethasone, resulting in its activation and increased localization at the cell membrane. Phosphorylates CREB1. Necessary for vascular remodeling during angiogenesis. The chain is Serine/threonine-protein kinase Sgk1 (Sgk1) from Mus musculus (Mouse).